Reading from the N-terminus, the 301-residue chain is Rhodopsin (301 aa).

Topologically, residues Leu-1–Met-18 are extracellular. The chain crosses the membrane as a helical span at residues Tyr-19 to Val-43. Residues Phe-44–Asn-55 are Cytoplasmic-facing. Residues Leu-56–Ile-78 traverse the membrane as a helical segment. Over Thr-79–Cys-92 the chain is Extracellular. Cys-92 and Cys-169 are joined by a disulfide. A helical membrane pass occupies residues Gln-93–Phe-115. The 'Ionic lock' involved in activated form stabilization motif lies at Asp-116–Tyr-118. The Cytoplasmic portion of the chain corresponds to Asp-116 to Lys-134. A helical membrane pass occupies residues Ala-135 to Phe-155. The Extracellular portion of the chain corresponds to Gly-156 to Ser-182. N-linked (GlcNAc...) asparagine glycosylation is present at Asn-165. The chain crosses the membrane as a helical span at residues Tyr-183–Val-204. The Cytoplasmic portion of the chain corresponds to Val-205 to Lys-245. Residues Ile-246–Val-267 traverse the membrane as a helical segment. Topologically, residues Gly-268–Val-278 are extracellular. The chain crosses the membrane as a helical span at residues Tyr-279–Ile-300. Residue Lys-288 is modified to N6-(retinylidene)lysine.

Belongs to the G-protein coupled receptor 1 family. Opsin subfamily. As to quaternary structure, homodimer. Interacts with GNAQ. Contains one covalently linked retinal chromophore.

It localises to the cell projection. It is found in the rhabdomere membrane. Functionally, photoreceptor required for image-forming vision at low light intensity. Can use both retinal and 3-dehydroretinal as visual pigment. Light-induced isomerization of 11-cis to all-trans retinal triggers a conformational change that activates signaling via G-proteins. Signaling via GNAQ probably mediates the activation of phospholipase C. This Orconectes australis (Southern cave crayfish) protein is Rhodopsin (RHO).